Consider the following 374-residue polypeptide: MLDVTLIVLCAGNSTRFEHKTKKQWIRVEDEPLWLNVTKRISSFAKFDKIIVTSHQDELNYMKNFSDDFTFVKGGETRQLSILNSLQFVTTKYVMITDVARACVPQSVIENLLNEKSSADCIVPILNVTDTVVYENDTIDRSNVKLIQTPQLSSTQVLRDALNTPIEFTDESSAIKAIDGKIKYIQGSTFSKKLTLGDELDELPCLKAPSNNFFTGTGFDIHAFEEIKDMYLGGVKLPYEYGFKAHSDGDVLIHSVIDALLGACGAGDIGEFFPDTDDKYKGIDSKLLLGQIVNFINNVGYEIVNVDLTIIAQKPKINPFKDEIKKSMAKLLRIEKQFVNVKATTAEKLGFIGRAEGVAVQSIATLKYYNWKKR.

The segment at 1–213 is 2-C-methyl-D-erythritol 4-phosphate cytidylyltransferase; it reads MLDVTLIVLC…PCLKAPSNNF (213 aa). Residues 214 to 374 form a 2-C-methyl-D-erythritol 2,4-cyclodiphosphate synthase region; that stretch reads FTGTGFDIHA…TLKYYNWKKR (161 aa). The a divalent metal cation site is built by aspartate 220 and histidine 222. 4-CDP-2-C-methyl-D-erythritol 2-phosphate is bound by residues 220 to 222 and 246 to 247; these read DIH and HS. Residue histidine 254 participates in a divalent metal cation binding. 4-CDP-2-C-methyl-D-erythritol 2-phosphate is bound by residues 268–270, 273–277, 344–347, phenylalanine 351, and arginine 354; these read DIG, FPDTD, and TTAE.

In the N-terminal section; belongs to the IspD/TarI cytidylyltransferase family. IspD subfamily. It in the C-terminal section; belongs to the IspF family. The cofactor is a divalent metal cation.

The catalysed reaction is 2-C-methyl-D-erythritol 4-phosphate + CTP + H(+) = 4-CDP-2-C-methyl-D-erythritol + diphosphate. It carries out the reaction 4-CDP-2-C-methyl-D-erythritol 2-phosphate = 2-C-methyl-D-erythritol 2,4-cyclic diphosphate + CMP. It functions in the pathway isoprenoid biosynthesis; isopentenyl diphosphate biosynthesis via DXP pathway; isopentenyl diphosphate from 1-deoxy-D-xylulose 5-phosphate: step 2/6. The protein operates within isoprenoid biosynthesis; isopentenyl diphosphate biosynthesis via DXP pathway; isopentenyl diphosphate from 1-deoxy-D-xylulose 5-phosphate: step 4/6. Its function is as follows. Bifunctional enzyme that catalyzes the formation of 4-diphosphocytidyl-2-C-methyl-D-erythritol from CTP and 2-C-methyl-D-erythritol 4-phosphate (MEP) (IspD), and catalyzes the conversion of 4-diphosphocytidyl-2-C-methyl-D-erythritol 2-phosphate (CDP-ME2P) to 2-C-methyl-D-erythritol 2,4-cyclodiphosphate (ME-CPP) with a corresponding release of cytidine 5-monophosphate (CMP) (IspF). The polypeptide is Bifunctional enzyme IspD/IspF (Aliarcobacter butzleri (strain RM4018) (Arcobacter butzleri)).